A 224-amino-acid chain; its full sequence is Ribonuclease T (224 aa).

Acidic residues predominate over residues 1–11 (MSEDLYEDDLD). A disordered region spans residues 1-22 (MSEDLYEDDLDTQGSSGPRHPM). The Exonuclease domain maps to 32–206 (VVVDVETGGF…YDTEKTAELF (175 aa)). Residues Asp-35, Glu-37, His-193, and Asp-198 each coordinate Mg(2+). Catalysis depends on His-193, which acts as the Proton donor/acceptor.

This sequence belongs to the RNase T family. In terms of assembly, homodimer. Requires Mg(2+) as cofactor.

Functionally, trims short 3' overhangs of a variety of RNA species, leaving a one or two nucleotide 3' overhang. Responsible for the end-turnover of tRNA: specifically removes the terminal AMP residue from uncharged tRNA (tRNA-C-C-A). Also appears to be involved in tRNA biosynthesis. The protein is Ribonuclease T of Pseudomonas putida (strain ATCC 700007 / DSM 6899 / JCM 31910 / BCRC 17059 / LMG 24140 / F1).